The chain runs to 589 residues: Proline--tRNA ligase (589 aa).

This sequence belongs to the class-II aminoacyl-tRNA synthetase family. ProS type 1 subfamily. As to quaternary structure, homodimer.

The protein resides in the cytoplasm. It catalyses the reaction tRNA(Pro) + L-proline + ATP = L-prolyl-tRNA(Pro) + AMP + diphosphate. In terms of biological role, catalyzes the attachment of proline to tRNA(Pro) in a two-step reaction: proline is first activated by ATP to form Pro-AMP and then transferred to the acceptor end of tRNA(Pro). As ProRS can inadvertently accommodate and process non-cognate amino acids such as alanine and cysteine, to avoid such errors it has two additional distinct editing activities against alanine. One activity is designated as 'pretransfer' editing and involves the tRNA(Pro)-independent hydrolysis of activated Ala-AMP. The other activity is designated 'posttransfer' editing and involves deacylation of mischarged Ala-tRNA(Pro). The misacylated Cys-tRNA(Pro) is not edited by ProRS. The polypeptide is Proline--tRNA ligase (Nocardioides sp. (strain ATCC BAA-499 / JS614)).